The sequence spans 87 residues: Glutaredoxin 1 (87 aa).

Positions 1-87 constitute a Glutaredoxin domain; the sequence is MFTVIFGRPG…WAKENLNLFA (87 aa). The cysteines at positions 11 and 14 are disulfide-linked.

It belongs to the glutaredoxin family. As to quaternary structure, monomer.

Functionally, the disulfide bond functions as an electron carrier in the glutathione-dependent synthesis of deoxyribonucleotides by the enzyme ribonucleotide reductase. In addition, it is also involved in reducing some disulfides in a coupled system with glutathione reductase. This chain is Glutaredoxin 1 (grxA), found in Salmonella typhi.